The primary structure comprises 425 residues: MDDDNGLELSLGLSCGGSTGKAKGNNNNNAGSSSENYRAEGGDRSAKVIDDFKNFLHPTSQRPAEPSSGSQRSDSGQQPPQNFFNDLSKAPTTEAEASTKPLWVEDESRKEAGNKRKFGFPGMNDDKKKEKDSSHVDMHEKKTKASHVSTATDEGSTAENEDVAESEVGGGSSSNHAKEVVRPPTDTNIVDNLTGQRRSNHGGSGTEEFTMRNMSYTVPFTVHPQNVVTSMPYSLPTKESGQHAAATSLLQPNANAGNLPIMFGYSPVQLPMLDKDGSGGIVALSQSPFAGRVPSNSATAKGEGKQPVAEEGSSEDASERPTGDNSNLNTAFSFDFSAIKPGMAADVKFGGSGARPNLPWVSTTGSGPHGRTISGVTYRYNANQIKIVCACHGSHMSPEEFVRHASEEYVSPESSMGMTAASAHT.

2 disordered regions span residues 1–207 and 288–327; these read MDDD…SGTE and PFAGRVPSNSATAKGEGKQPVAEEGSSEDASERPTGDNSN. The necessary and sufficient for the interaction with TOPLESS stretch occupies residues 7-17; it reads LELSLGLSCGG. Residues 20 to 34 show a composition bias toward low complexity; sequence GKAKGNNNNNAGSSS. The segment covering 37 to 54 has biased composition (basic and acidic residues); sequence YRAEGGDRSAKVIDDFKN. Low complexity predominate over residues 66–81; the sequence is PSSGSQRSDSGQQPPQ. Residues 124–140 show a composition bias toward basic and acidic residues; sequence NDDKKKEKDSSHVDMHE. Composition is skewed to polar residues over residues 146-158, 185-197, and 288-299; these read SHVSTATDEGSTA, TDTNIVDNLTGQR, and PFAGRVPSNSAT. The necessary and sufficient for the interaction with the JAZ proteins stretch occupies residues 322 to 425; sequence TGDNSNLNTA…MGMTAASAHT (104 aa).

This sequence belongs to the Ninja family. In terms of assembly, component of a complex at least composed of TOPLESS, TPR2, TPR3, TIFY4B/PPD2, MYC3/ATR2 and TIFY3B/JAZ12. Interacts (via C-terminus) with TIFY10A/JAZ1; TIFY10B/JAZ2; TIFY6B/JAZ3; TIFY6A/JAZ4; TIFY11A/JAZ5; TIFY11B/JAZ6; TIFY7/JAZ9; TIFY9/JAZ10; TIFY3A/JAZ11; TIFY3B/JAZ12; TIFY4A/PPD1; TIFY4B/PPD2 and TIFY8 (via TIFY domain). Interacts with TOPLESS. Interacts with PAT1H1.

The protein resides in the nucleus. In terms of biological role, acts as a transcriptional repressor. Negative regulator of jasmonate responses. Connects the JAZ proteins and the non-JAZ protein TIFY8 with the TOPLESS corepressors. The polypeptide is AFP homolog 2 (Arabidopsis thaliana (Mouse-ear cress)).